The primary structure comprises 346 residues: Farnesyl diphosphate synthase 1 (346 aa).

Residues K52, R55, and Q90 each coordinate isopentenyl diphosphate. Positions 97 and 101 each coordinate Mg(2+). Residues 97 to 101 (DDIMD) carry the DDXXD motif motif. Residue R106 coordinates dimethylallyl diphosphate. An isopentenyl diphosphate-binding site is contributed by R107. 3 residues coordinate dimethylallyl diphosphate: K194, T195, and Q233. Residues 236-240 (DDYLD) carry the DDXXD motif motif. Dimethylallyl diphosphate contacts are provided by K250 and K259.

Belongs to the FPP/GGPP synthase family. Requires Mg(2+) as cofactor. It depends on Mn(2+) as a cofactor. In terms of tissue distribution, highly expressed in shoots.

The catalysed reaction is isopentenyl diphosphate + (2E)-geranyl diphosphate = (2E,6E)-farnesyl diphosphate + diphosphate. The enzyme catalyses isopentenyl diphosphate + dimethylallyl diphosphate = (2E)-geranyl diphosphate + diphosphate. It functions in the pathway isoprenoid biosynthesis; farnesyl diphosphate biosynthesis; farnesyl diphosphate from geranyl diphosphate and isopentenyl diphosphate: step 1/1. Its pathway is isoprenoid biosynthesis; geranyl diphosphate biosynthesis; geranyl diphosphate from dimethylallyl diphosphate and isopentenyl diphosphate: step 1/1. Functionally, catalyzes the sequential condensation of isopentenyl pyrophosphate (IPP) with the allylic pyrophosphates, dimethylallyl pyrophosphate (DMAPP), and then with the resultant geranylpyrophosphate (GPP) to the ultimate product farnesyl pyrophosphate (FPP). Has a 4.5 time greater affinity for GPP versus DMAPP. The sequence is that of Farnesyl diphosphate synthase 1 (FDS-1) from Artemisia spiciformis (Spiked big sagebrush).